The primary structure comprises 436 residues: 3-ketoacyl-CoA thiolase (436 aa).

C99 acts as the Acyl-thioester intermediate in catalysis. Residues H392 and C422 each act as proton acceptor in the active site.

The protein belongs to the thiolase-like superfamily. Thiolase family. As to quaternary structure, heterotetramer of two alpha chains (FadJ) and two beta chains (FadI).

It is found in the cytoplasm. It catalyses the reaction an acyl-CoA + acetyl-CoA = a 3-oxoacyl-CoA + CoA. It functions in the pathway lipid metabolism; fatty acid beta-oxidation. Its function is as follows. Catalyzes the final step of fatty acid oxidation in which acetyl-CoA is released and the CoA ester of a fatty acid two carbons shorter is formed. The chain is 3-ketoacyl-CoA thiolase from Escherichia coli (strain K12 / MC4100 / BW2952).